A 357-amino-acid polypeptide reads, in one-letter code: Phenylalanine--tRNA ligase alpha subunit (357 aa).

Glu-257 contacts Mg(2+).

It belongs to the class-II aminoacyl-tRNA synthetase family. Phe-tRNA synthetase alpha subunit type 1 subfamily. Tetramer of two alpha and two beta subunits. It depends on Mg(2+) as a cofactor.

The protein localises to the cytoplasm. The catalysed reaction is tRNA(Phe) + L-phenylalanine + ATP = L-phenylalanyl-tRNA(Phe) + AMP + diphosphate + H(+). This is Phenylalanine--tRNA ligase alpha subunit from Ruegeria pomeroyi (strain ATCC 700808 / DSM 15171 / DSS-3) (Silicibacter pomeroyi).